The chain runs to 303 residues: 1D-myo-inositol 2-acetamido-2-deoxy-alpha-D-glucopyranoside deacetylase (303 aa).

Residues His-13, Asp-16, and His-147 each coordinate Zn(2+).

The protein belongs to the MshB deacetylase family. Zn(2+) serves as cofactor.

The catalysed reaction is 1D-myo-inositol 2-acetamido-2-deoxy-alpha-D-glucopyranoside + H2O = 1D-myo-inositol 2-amino-2-deoxy-alpha-D-glucopyranoside + acetate. Functionally, catalyzes the deacetylation of 1D-myo-inositol 2-acetamido-2-deoxy-alpha-D-glucopyranoside (GlcNAc-Ins) in the mycothiol biosynthesis pathway. This chain is 1D-myo-inositol 2-acetamido-2-deoxy-alpha-D-glucopyranoside deacetylase, found in Mycobacterium tuberculosis (strain ATCC 25177 / H37Ra).